The following is a 196-amino-acid chain: Thymidine kinase (196 aa).

ATP is bound by residues 9 to 16 (GTMNSGKS) and 85 to 88 (DEAQ). The active-site Proton acceptor is the E86. Positions 143, 146, 180, and 183 each coordinate Zn(2+).

Belongs to the thymidine kinase family. Homotetramer.

The protein localises to the cytoplasm. It carries out the reaction thymidine + ATP = dTMP + ADP + H(+). This chain is Thymidine kinase, found in Streptococcus thermophilus (strain CNRZ 1066).